Reading from the N-terminus, the 269-residue chain is MWCTWALGRVVLAVVFLVALAAGDAAPPKVHRNHGKFTAGPWKQAHATFYGGRDGSGTLDGACGYKDTSKEGYGVQTVAVSTPLFGAGAGCGACYEVKCVDSPDGCKVGAAPLVVTATNLCPPNPGQSNDNGGWCNPPREHFDLSMPAFLQIAQEKAGIVPISYRRVPCVKVGGIRYTITGNPYFNLVMVSNVGGAGDVAGLSVKGNKRVKWTPLKRNWGQEWQTSEVLTGESLTFRVMTGDHRKATSWHVLPPDWQFGVTYQATKNFN.

The first 25 residues, 1–25 (MWCTWALGRVVLAVVFLVALAAGDA), serve as a signal peptide directing secretion. In terms of domain architecture, Expansin-like EG45 spans 60-174 (DGACGYKDTS…RRVPCVKVGG (115 aa)). Positions 184-264 (YFNLVMVSNV…DWQFGVTYQA (81 aa)) constitute an Expansin-like CBD domain.

It belongs to the expansin family. Expansin A subfamily.

Its subcellular location is the secreted. The protein resides in the cell wall. It localises to the membrane. In terms of biological role, may cause loosening and extension of plant cell walls by disrupting non-covalent bonding between cellulose microfibrils and matrix glucans. No enzymatic activity has been found. May be required for rapid internodal elongation in deepwater rice during submergence. This Oryza sativa subsp. japonica (Rice) protein is Expansin-A32 (EXPA32).